Here is a 287-residue protein sequence, read N- to C-terminus: Urease accessory protein UreD (287 aa).

It belongs to the UreD family. UreD, UreF and UreG form a complex that acts as a GTP-hydrolysis-dependent molecular chaperone, activating the urease apoprotein by helping to assemble the nickel containing metallocenter of UreC. The UreE protein probably delivers the nickel.

Its subcellular location is the cytoplasm. In terms of biological role, required for maturation of urease via the functional incorporation of the urease nickel metallocenter. The chain is Urease accessory protein UreD from Ureaplasma parvum serovar 3 (strain ATCC 27815 / 27 / NCTC 11736).